A 551-amino-acid polypeptide reads, in one-letter code: Cytochrome P450 monooxygenase virE (551 aa).

The first 25 residues, 1-25 (MPKPWVVFGLGTLVLFLWRLNKIGR), serve as a signal peptide directing secretion. An N-linked (GlcNAc...) asparagine glycan is attached at Asn392. Cys439 lines the heme pocket.

Belongs to the cytochrome P450 family. Requires heme as cofactor.

The protein operates within secondary metabolite biosynthesis. Cytochrome P450 monooxygenase; part of the gene cluster that mediates the biosynthesis of virensols and trichoxide, fungal natural products that contain or are derived from a salicylaldehyde core. The pathway begins with the synthesis of the reduced chain in virensol C by the highly reducing polyketide synthase virA via condensation of one acetate and 8 malonate units. VirA has interesting programming rules since the first 2 ketides are fully reduced, the 3 following ketides undergo beta-dehydration, and the last 3 ketides are only reduced to beta-hydroxys to yield the trihydroxy portion. The production of aldehyde virensol C by virA alone is surprising, since virA does not contain a reductase (R) domain that is typically associated with reductive product release in HRPKS. The cupin-domain enzyme virC is involved in enhancing virA product turnover. The short-chain dehydrogenase virB then oxidizes the C-7 alcohol of virensol C to a ketone, yielding virensol D. Virensol D is further transformed to salicylaldehyde 5-deoxyaurocitrin by the short-chain dehydrogenase virD. VirD catalyzes the dehydrogenation of C-3 to form the beta-ketone aldehyde, which is followed by the generation of the nucleophilic C-2 that is required for the intramolecular aldol condensation between C-2 and C-7, itself followed by dehydration and aromatization which leads to salicylaldehyde 5-deoxyaurocitrin. While the dehydrogenation of virensol D is definitely catalyzed by virD, the aldol condensation and dehydration may be uncatalyzed or assisted by virD. The short chain dehydrogenase virG then converts salicylaldehyde 5-deoxyaurocitrin into virensol B which is further hydroxylated by the cytochrome P450 monooxygenase virE to yield the hydroquinone virensol A. VirI then may oxidize virensol A to form the quinone, while virH performs the epoxidation. Finally, the two remaining short-chain dehydrogenases, virK and virL, are probably responsible for reducing the ketones to the corresponding alcohols to furnish the epoxycyclohexanol structure in trichoxide. The sequence is that of Cytochrome P450 monooxygenase virE from Hypocrea virens (strain Gv29-8 / FGSC 10586) (Gliocladium virens).